A 218-amino-acid polypeptide reads, in one-letter code: Small ribosomal subunit protein uS3c (218 aa).

The KH type-2 domain maps to 39–109 (IRNYVKVNLS…QIRINVTELK (71 aa)).

It belongs to the universal ribosomal protein uS3 family. Part of the 30S ribosomal subunit.

The protein resides in the plastid. It localises to the chloroplast. The sequence is that of Small ribosomal subunit protein uS3c (rps3) from Rhodomonas salina (Cryptomonas salina).